Here is a 333-residue protein sequence, read N- to C-terminus: DNA-directed RNA polymerase subunit alpha (333 aa).

The interval 1 to 246 (MKKMVQIKYK…AHLQVIGDVK (246 aa)) is alpha N-terminal domain (alpha-NTD). The segment at 262 to 333 (VEPSIHSVDI…YNVTLNRGEK (72 aa)) is alpha C-terminal domain (alpha-CTD).

Belongs to the RNA polymerase alpha chain family. As to quaternary structure, homodimer. The RNAP catalytic core consists of 2 alpha, 1 beta, 1 beta' and 1 omega subunit. When a sigma factor is associated with the core the holoenzyme is formed, which can initiate transcription.

It carries out the reaction RNA(n) + a ribonucleoside 5'-triphosphate = RNA(n+1) + diphosphate. DNA-dependent RNA polymerase catalyzes the transcription of DNA into RNA using the four ribonucleoside triphosphates as substrates. In Mycoplasmopsis pulmonis (strain UAB CTIP) (Mycoplasma pulmonis), this protein is DNA-directed RNA polymerase subunit alpha.